The sequence spans 500 residues: Apolipoprotein N-acyltransferase (500 aa).

Helical transmembrane passes span 5 to 25 (VAPF…WIFV), 38 to 58 (LLLL…FWIT), 74 to 94 (LAIT…FGAI), 111 to 131 (ILIG…GPLW), 145 to 165 (AILH…IVSV), and 185 to 205 (LAIA…LYTA). A CN hydrolase domain is found at 215–462 (LKVGIVQGNI…ETIYRRQTQN (248 aa)). Catalysis depends on Glu261, which acts as the Proton acceptor. Lys318 is a catalytic residue. The active-site Nucleophile is Cys369. A helical transmembrane segment spans residues 469-489 (DWFTPLLVGLSFLGWSLNIFW).

Belongs to the CN hydrolase family. Apolipoprotein N-acyltransferase subfamily.

Its subcellular location is the cell inner membrane. The catalysed reaction is N-terminal S-1,2-diacyl-sn-glyceryl-L-cysteinyl-[lipoprotein] + a glycerophospholipid = N-acyl-S-1,2-diacyl-sn-glyceryl-L-cysteinyl-[lipoprotein] + a 2-acyl-sn-glycero-3-phospholipid + H(+). Its pathway is protein modification; lipoprotein biosynthesis (N-acyl transfer). Catalyzes the phospholipid dependent N-acylation of the N-terminal cysteine of apolipoprotein, the last step in lipoprotein maturation. The sequence is that of Apolipoprotein N-acyltransferase from Nostoc sp. (strain PCC 7120 / SAG 25.82 / UTEX 2576).